Reading from the N-terminus, the 608-residue chain is Amino-acid acetyltransferase, mitochondrial (608 aa).

In terms of domain architecture, N-acetyltransferase spans 402 to 604 (LNLITEHEKG…DICTRIEPSL (203 aa)).

It belongs to the acetyltransferase family.

The protein localises to the mitochondrion. The catalysed reaction is L-glutamate + acetyl-CoA = N-acetyl-L-glutamate + CoA + H(+). It participates in amino-acid biosynthesis; L-arginine biosynthesis; N(2)-acetyl-L-ornithine from L-glutamate: step 1/4. N-acetylglutamate synthase involved in arginine biosynthesis. This Yarrowia lipolytica (strain CLIB 122 / E 150) (Yeast) protein is Amino-acid acetyltransferase, mitochondrial (ARG2).